The chain runs to 295 residues: Outer surface protein B (295 aa).

A signal peptide spans 1 to 16; sequence MKQYLLGFTLVFALIA. Residue Cys17 is the site of N-palmitoyl cysteine attachment. A lipid anchor (S-diacylglycerol cysteine) is attached at Cys17.

It is found in the cell outer membrane. This chain is Outer surface protein B (ospB), found in Borreliella burgdorferi (Lyme disease spirochete).